An 836-amino-acid chain; its full sequence is Translation initiation factor IF-2 (836 aa).

The span at 1–17 shows a compositional bias: basic residues; that stretch reads MLRLMRQKKLSIQRRTK. 2 disordered regions span residues 1-43 and 83-240; these read MLRL…RTVK and AAKK…KGAA. Residues 18–27 are compositionally biased toward low complexity; the sequence is TTVSSTTTGG. Basic and acidic residues predominate over residues 83–153; it reads AAKKEADEKV…AAEEAKRYAE (71 aa). Acidic residues predominate over residues 154-167; the sequence is ADDSDNESSSEDYS. Residues 192 to 202 show a composition bias toward basic residues; it reads RGKNKVAKAKK. Positions 203-229 are enriched in basic and acidic residues; it reads GGRDDENSKNSKNERESNRKNQKDAKF. The tr-type G domain occupies 335–505; that stretch reads TRAPVVTIMG…LLQSEVLELT (171 aa). The G1 stretch occupies residues 344 to 351; sequence GHVDHGKT. Residue 344-351 participates in GTP binding; it reads GHVDHGKT. The segment at 369 to 373 is G2; sequence GITQH. Residues 391–394 form a G3 region; that stretch reads DTPG. GTP contacts are provided by residues 391–395 and 445–448; these read DTPGH and NKID. Positions 445–448 are G4; it reads NKID. A G5 region spans residues 481–483; sequence SAK.

This sequence belongs to the TRAFAC class translation factor GTPase superfamily. Classic translation factor GTPase family. IF-2 subfamily.

The protein localises to the cytoplasm. Functionally, one of the essential components for the initiation of protein synthesis. Protects formylmethionyl-tRNA from spontaneous hydrolysis and promotes its binding to the 30S ribosomal subunits. Also involved in the hydrolysis of GTP during the formation of the 70S ribosomal complex. The sequence is that of Translation initiation factor IF-2 from Haemophilus influenzae (strain PittEE).